A 422-amino-acid chain; its full sequence is Solute carrier family 35 member D3 (422 aa).

The next 10 membrane-spanning stretches (helical) occupy residues 9 to 29, 38 to 58, 64 to 84, 103 to 123, 131 to 151, 155 to 175, 187 to 207, 224 to 244, 257 to 277, and 280 to 300; these read VLGI…NILL, FSFL…SLEL, LIAV…VAVL, MYVV…VLVL, GVLA…AGDL, PIGY…LVLI, LTAQ…CSFA, AMVS…FTTL, FVGV…FSDV, and TSLF…YCVA. Residues 339–365 are disordered; the sequence is AKSGNSEPESAEGAGDSVQQGGQESRG. A compositionally biased stretch (polar residues) spans 355-364; it reads SVQQGGQESR.

The protein belongs to the TPT transporter family. SLC35D subfamily. In terms of assembly, could interact with ATG14, BECN1 and PIK3C3 that form the PI3KC3-C1/AIC/autophagy initiation complex; enhancing the formation of the AIC and promoting autophagy. Expressed in brain. Expressed in subsets of dopaminergic neurons. Expressed in maturing megakaryocytes.

It is found in the cytoplasmic vesicle. It localises to the secretory vesicle. Its subcellular location is the synaptic vesicle membrane. The protein localises to the early endosome membrane. The protein resides in the endoplasmic reticulum membrane. The catalysed reaction is UDP-alpha-D-glucose(in) = UDP-alpha-D-glucose(out). Inhibited by proton uncouplers that directly abolish the proton electrochemical gradient. Probable UDP-glucose transmembrane transporter involved in UDP-glucose transport from the cytosol to the lumen of synaptic vesicles. It is involved in platelet dense granules maturation. Functionally, alternatively, could function as a molecular adapter enhancing the formation of the PI3KC3-C1/AIC/autophagy initiation complex to promote autophagy in dopaminergic neurons. Could also regulate the plasma membrane localization of the D(1A) dopamine receptor/DRD1 and dopamine signaling. The chain is Solute carrier family 35 member D3 from Mus musculus (Mouse).